We begin with the raw amino-acid sequence, 278 residues long: Bifunctional protein FolD (278 aa).

NADP(+) is bound by residues 165-167, serine 190, and threonine 231; that span reads GRS.

The protein belongs to the tetrahydrofolate dehydrogenase/cyclohydrolase family. Homodimer.

The catalysed reaction is (6R)-5,10-methylene-5,6,7,8-tetrahydrofolate + NADP(+) = (6R)-5,10-methenyltetrahydrofolate + NADPH. It carries out the reaction (6R)-5,10-methenyltetrahydrofolate + H2O = (6R)-10-formyltetrahydrofolate + H(+). The protein operates within one-carbon metabolism; tetrahydrofolate interconversion. Its function is as follows. Catalyzes the oxidation of 5,10-methylenetetrahydrofolate to 5,10-methenyltetrahydrofolate and then the hydrolysis of 5,10-methenyltetrahydrofolate to 10-formyltetrahydrofolate. The sequence is that of Bifunctional protein FolD from Clostridium novyi (strain NT).